The chain runs to 388 residues: Galactokinase (388 aa).

33-36 (EHTD) contacts substrate. Residues serine 67 and 125 to 131 (GAGLSSS) each bind ATP. Mg(2+) is bound by residues serine 131 and glutamate 163. The active-site Proton acceptor is the aspartate 175. Tyrosine 225 is a binding site for substrate.

Belongs to the GHMP kinase family. GalK subfamily.

The protein localises to the cytoplasm. It catalyses the reaction alpha-D-galactose + ATP = alpha-D-galactose 1-phosphate + ADP + H(+). It functions in the pathway carbohydrate metabolism; galactose metabolism. Functionally, catalyzes the transfer of the gamma-phosphate of ATP to D-galactose to form alpha-D-galactose-1-phosphate (Gal-1-P). The chain is Galactokinase from Limosilactobacillus fermentum (strain NBRC 3956 / LMG 18251) (Lactobacillus fermentum).